Consider the following 940-residue polypeptide: Gamma-aminobutyric acid type B receptor subunit 2 (940 aa).

The signal sequence occupies residues 1–40 (MASPPSSGQPRPPPPPPPPARLLLPLLLSLLLSLAPGAWG). The Extracellular portion of the chain corresponds to 41–482 (WARGAPRPPP…LRKISLPLYS (442 aa)). An N-linked (GlcNAc...) asparagine glycan is attached at asparagine 89. Cystine bridges form between cysteine 107–cysteine 134, cysteine 236–cysteine 265, and cysteine 264–cysteine 301. Asparagine 297, asparagine 388, asparagine 403, and asparagine 452 each carry an N-linked (GlcNAc...) asparagine glycan. A helical transmembrane segment spans residues 483–503 (ILSALTILGMIMASAFLFFNI). The Cytoplasmic portion of the chain corresponds to 504 to 521 (KNRNQKLIKMSSPYMNNL). Residues 522 to 542 (IILGGMLSYASIFLFGLDGSF) form a helical membrane-spanning segment. Topologically, residues 543-550 (VSEKTFET) are extracellular. The chain crosses the membrane as a helical span at residues 551-571 (LCTVRTWILTVGYTTAFGAMF). Over 572–596 (AKTWRVHAIFKNVKMKKKIIKDQKL) the chain is Cytoplasmic. Residues 597 to 617 (LVIVGGMLLIDLCILICWQAV) traverse the membrane as a helical segment. At 618–653 (DPLRRTVERYSMEPDPAGRDISIRPLLEHCENTHMT) the chain is on the extracellular side. Residues 654-674 (IWLGIVYAYKGLLMLFGCFLA) traverse the membrane as a helical segment. The Cytoplasmic portion of the chain corresponds to 675-690 (WETRNVSIPALNDSKY). The chain crosses the membrane as a helical span at residues 691 to 711 (IGMSVYNVGIMCIIGAAVSFL). The Extracellular portion of the chain corresponds to 712–719 (TRDQPNVQ). Residues 720–740 (FCIVALVIIFCSTITLCLVFV) traverse the membrane as a helical segment. The Cytoplasmic portion of the chain corresponds to 741–940 (PKLITLRTNP…PSFRVMVSGL (200 aa)). A disordered region spans residues 762–789 (TQNQKKEDSKTSTSVTSVNQASTSRLEG). The span at 772-786 (TSTSVTSVNQASTSR) shows a compositional bias: polar residues. Residues serine 775 and serine 778 each carry the phosphoserine modification. Residues 781–818 (QASTSRLEGLQSENHRLRMKITELDKDLEEVTMQLQDT) adopt a coiled-coil conformation. Residue threonine 818 is modified to Phosphothreonine. Residues serine 883, serine 892, serine 912, serine 915, serine 919, and serine 923 each carry the phosphoserine modification.

The protein belongs to the G-protein coupled receptor 3 family. GABA-B receptor subfamily. In terms of assembly, heterodimer of GABBR1 and GABBR2. Homodimers may form, but are inactive. Interacts (via C-terminus) with ATF4 (via leucine zipper domain).

The protein localises to the cell membrane. It is found in the postsynaptic cell membrane. Its function is as follows. Component of a heterodimeric G-protein coupled receptor for GABA, formed by GABBR1 and GABBR2. Within the heterodimeric GABA receptor, only GABBR1 seems to bind agonists, while GABBR2 mediates coupling to G proteins. Ligand binding causes a conformation change that triggers signaling via guanine nucleotide-binding proteins (G proteins) and modulates the activity of down-stream effectors, such as adenylate cyclase. Signaling inhibits adenylate cyclase, stimulates phospholipase A2, activates potassium channels, inactivates voltage-dependent calcium-channels and modulates inositol phospholipid hydrolysis. Plays a critical role in the fine-tuning of inhibitory synaptic transmission. Pre-synaptic GABA receptor inhibits neurotransmitter release by down-regulating high-voltage activated calcium channels, whereas postsynaptic GABA receptor decreases neuronal excitability by activating a prominent inwardly rectifying potassium (Kir) conductance that underlies the late inhibitory postsynaptic potentials. Not only implicated in synaptic inhibition but also in hippocampal long-term potentiation, slow wave sleep, muscle relaxation and antinociception. Interacts with KCTD8, KCTD12 and KCTD16; this interaction determines the pharmacology and kinetics of the receptor response, the KCTD proteins markedly accelerating the GABA-B response, although to different extents. This is Gamma-aminobutyric acid type B receptor subunit 2 (Gabbr2) from Mus musculus (Mouse).